We begin with the raw amino-acid sequence, 83 residues long: Sulfur carrier protein TusA (83 aa).

Cysteine 19 (cysteine persulfide intermediate) is an active-site residue.

This sequence belongs to the sulfur carrier protein TusA family.

It is found in the cytoplasm. Functionally, sulfur carrier protein which probably makes part of a sulfur-relay system. The protein is Sulfur carrier protein TusA of Vibrio atlanticus (strain LGP32) (Vibrio splendidus (strain Mel32)).